We begin with the raw amino-acid sequence, 742 residues long: Synaptic vesicle glycoprotein 2A (742 aa).

The segment at 1–57 (MEEGFRDRAAFIRGAKDIAKEVKKHATKKVVKGLDRVQDEYSRRSYSRFEEEDDDDD) is interaction with SYT1. At 1 to 169 (MEEGFRDRAA…GHGRFQWTLY (169 aa)) the chain is on the cytoplasmic side. Positions 32-49 (KGLDRVQDEYSRRSYSRF) are enriched in basic and acidic residues. A disordered region spans residues 32 to 144 (KGLDRVQDEY…GRGEAQRRKE (113 aa)). Serine 80 and serine 81 each carry phosphoserine. The residue at position 84 (threonine 84) is a Phosphothreonine. Residues 122 to 137 (VRGGLGDGEGPPGGRG) are compositionally biased toward gly residues. The helical transmembrane segment at 170 to 190 (FVLGLALMADGVEVFVVGFVL) threads the bilayer. Residues 191-205 (PSAEKDMCLSDSNKG) lie on the Extracellular side of the membrane. Residues 206–226 (MLGLIVYLGMMVGAFLWGGLA) traverse the membrane as a helical segment. Residues 227–233 (DRLGRRQ) lie on the Cytoplasmic side of the membrane. Residues 234 to 254 (CLLISLSVNSVFAFFSSFVQG) traverse the membrane as a helical segment. Over 255-262 (YGTFLFCR) the chain is Extracellular. The chain crosses the membrane as a helical span at residues 263–283 (LLSGVGIGGSIPIVFSYFSEF). The Cytoplasmic portion of the chain corresponds to 284 to 294 (LAQEKRGEHLS). Residues 295–315 (WLCMFWMIGGVYAAAMAWAII) form a helical membrane-spanning segment. The Extracellular portion of the chain corresponds to 316–334 (PHYGWSFQMGSAYQFHSWR). A helical transmembrane segment spans residues 335–355 (VFVLVCAFPSVFAIGALTTQP). At 356–447 (ESPRFFLENG…CFGPEYRRIT (92 aa)) the chain is on the cytoplasmic side. Residue serine 393 is modified to Phosphoserine. A helical transmembrane segment spans residues 448–468 (LMMMGVWFTMSFSYYGLTVWF). Residues 469 to 598 (PDMIRHLQAV…GTGEGAYMVY (130 aa)) are Extracellular-facing. Tyrosine 480 is subject to Phosphotyrosine. Asparagine 498, asparagine 548, and asparagine 573 each carry an N-linked (GlcNAc...) asparagine glycan. The chain crosses the membrane as a helical span at residues 599-619 (FVSFLGTLAVLPGNIVSALLM). Residues 620 to 626 (DKIGRLR) lie on the Cytoplasmic side of the membrane. The chain crosses the membrane as a helical span at residues 627 to 647 (MLAGSSVMSCVSCFFLSFGNS). The Extracellular segment spans residues 648–651 (ESAM). The chain crosses the membrane as a helical span at residues 652–672 (IALLCLFGGVSIASWNALDVL). Topologically, residues 673 to 685 (TVELYPSDKRTTA) are cytoplasmic. The chain crosses the membrane as a helical span at residues 686–708 (FGFLNALCKLAAVLGISIFTSFV). Topologically, residues 709 to 712 (GITK) are extracellular. Residues 713–731 (AAPILFASAALALGSSLAL) traverse the membrane as a helical segment. Topologically, residues 732–742 (KLPETRGQVLQ) are cytoplasmic.

The protein belongs to the major facilitator superfamily. In terms of assembly, interacts with SYT1/synaptotagmin-1 in a calcium-dependent manner. Binds the adapter protein complex AP-2. Phosphorylation by CK1 of the N-terminal cytoplasmic domain regulates interaction with SYT1. In terms of processing, N-glycosylated.

Its subcellular location is the presynapse. The protein resides in the cytoplasmic vesicle. The protein localises to the secretory vesicle. It is found in the synaptic vesicle membrane. Plays a role in the control of regulated secretion in neural and endocrine cells, enhancing selectively low-frequency neurotransmission. Positively regulates vesicle fusion by maintaining the readily releasable pool of secretory vesicles. The chain is Synaptic vesicle glycoprotein 2A (SV2A) from Bos taurus (Bovine).